Here is a 144-residue protein sequence, read N- to C-terminus: Transmembrane protein 170A (144 aa).

Topologically, residues 1 to 50 (MEREGSGGGGGSAGLLQQILSLKLVPRVGNGTLCPNSTSLCSFPEMWYGV) are extracellular. N-linked (GlcNAc...) asparagine glycosylation is found at asparagine 30 and asparagine 36. A helical membrane pass occupies residues 51–71 (FLWALMSSVFFHVPAGLLALF). At 72 to 85 (TLRHHKYGRFMSVS) the chain is on the cytoplasmic side. Residues 86-106 (ILLMGIVGPITAGILTSAAIA) traverse the membrane as a helical segment. Over 107–116 (GVYRAAGKEM) the chain is Extracellular. The chain crosses the membrane as a helical span at residues 117–137 (IPFEALTLGTGQTFCVVVVSF). Residues 138-144 (LRVLATL) lie on the Cytoplasmic side of the membrane.

It belongs to the TMEM170 family. In terms of assembly, interacts with RTN4.

It localises to the endoplasmic reticulum membrane. It is found in the nucleus envelope. Functionally, acts as a regulator of endoplasmic reticulum (ER) and nuclear envelope (NE) morphogenesis. Affects the ratio between tubular ER and ER sheets by promoting sheet formation at the expense of tubules. Influences NE expansion, nuclear pore complex formation and proper localization of inner nuclear membrane proteins. This is Transmembrane protein 170A (Tmem170a) from Mus musculus (Mouse).